Consider the following 161-residue polypeptide: Lipoprotein signal peptidase (161 aa).

The next 3 helical transmembrane spans lie at 9-29, 63-83, and 88-108; these read ISLLMTFIVLVFDQVSKWLIT, KMLFFYIITIIILIVLVIFYI, and FNLFMQVAISLLFAGALGNFI. Active-site residues include D118 and D136. The helical transmembrane segment at 131–151 threads the bilayer; the sequence is IFNIADSSLTIGVIFVIITLI.

It belongs to the peptidase A8 family.

The protein localises to the cell membrane. The enzyme catalyses Release of signal peptides from bacterial membrane prolipoproteins. Hydrolyzes -Xaa-Yaa-Zaa-|-(S,diacylglyceryl)Cys-, in which Xaa is hydrophobic (preferably Leu), and Yaa (Ala or Ser) and Zaa (Gly or Ala) have small, neutral side chains.. It participates in protein modification; lipoprotein biosynthesis (signal peptide cleavage). Its function is as follows. This protein specifically catalyzes the removal of signal peptides from prolipoproteins. The polypeptide is Lipoprotein signal peptidase (Staphylococcus epidermidis (strain ATCC 35984 / DSM 28319 / BCRC 17069 / CCUG 31568 / BM 3577 / RP62A)).